We begin with the raw amino-acid sequence, 1405 residues long: DNA-directed RNA polymerase subunit beta' (1405 aa).

Residues Cys70, Cys72, Cys85, and Cys88 each coordinate Zn(2+). Asp460, Asp462, and Asp464 together coordinate Mg(2+). Residues Cys814, Cys888, Cys895, and Cys898 each coordinate Zn(2+).

It belongs to the RNA polymerase beta' chain family. As to quaternary structure, the RNAP catalytic core consists of 2 alpha, 1 beta, 1 beta' and 1 omega subunit. When a sigma factor is associated with the core the holoenzyme is formed, which can initiate transcription. The cofactor is Mg(2+). Zn(2+) is required as a cofactor.

It carries out the reaction RNA(n) + a ribonucleoside 5'-triphosphate = RNA(n+1) + diphosphate. DNA-dependent RNA polymerase catalyzes the transcription of DNA into RNA using the four ribonucleoside triphosphates as substrates. In Wigglesworthia glossinidia brevipalpis, this protein is DNA-directed RNA polymerase subunit beta'.